The sequence spans 325 residues: Protease HtpX homolog (325 aa).

The helical transmembrane segment at 20 to 40 (IGYLLGGGGGMMIALVIAVAM) threads the bilayer. Zn(2+) is bound at residue histidine 130. The active site involves glutamate 131. Histidine 134 lines the Zn(2+) pocket. 2 helical membrane passes run 145-165 (IVAT…FLGG) and 173-193 (VMGV…AMIV). Glutamate 202 lines the Zn(2+) pocket. Residues 288–325 (AMTARAAAPSQNSGPWGQRSDNAGGNSNGGSRYRGPWS) are disordered. The segment covering 306–325 (RSDNAGGNSNGGSRYRGPWS) has biased composition (low complexity).

The protein belongs to the peptidase M48B family. It depends on Zn(2+) as a cofactor.

The protein resides in the cell inner membrane. The chain is Protease HtpX homolog from Brucella abortus (strain S19).